The following is a 123-amino-acid chain: Small ribosomal subunit protein uS12 (123 aa).

Residues 1–28 form a disordered region; it reads MPTIQQLIRTERSKVQKKTKSPALKQCP. Asp-89 carries the post-translational modification 3-methylthioaspartic acid. Positions 104–123 are disordered; sequence ATGVKDRKQGRSKYGTKRPK. The span at 113–123 shows a compositional bias: basic residues; sequence GRSKYGTKRPK.

Belongs to the universal ribosomal protein uS12 family. In terms of assembly, part of the 30S ribosomal subunit. Contacts proteins S8 and S17. May interact with IF1 in the 30S initiation complex.

Its function is as follows. With S4 and S5 plays an important role in translational accuracy. Interacts with and stabilizes bases of the 16S rRNA that are involved in tRNA selection in the A site and with the mRNA backbone. Located at the interface of the 30S and 50S subunits, it traverses the body of the 30S subunit contacting proteins on the other side and probably holding the rRNA structure together. The combined cluster of proteins S8, S12 and S17 appears to hold together the shoulder and platform of the 30S subunit. This is Small ribosomal subunit protein uS12 from Gloeothece citriformis (strain PCC 7424) (Cyanothece sp. (strain PCC 7424)).